The chain runs to 511 residues: MWDLAQQYPDTTPESSPLHETRARERRSSLVDHRPLKRASSLSFRIHTPCDYSSGASMTSCTSSTSLSSLGSLSSSARQLIMSRKTSPRHPTRLKTRFFSPFHSTNTSPVSPRLLETVEKLSIDNDAHPIFEIPEIVNLILHYVGHDDRERVPTEHAPVRKPPMSLNHAKLIHGEQGEKVWQRTLSTSSTAPPTGNLHNCLLVNKLWHSLTLEVLQENLYFDSDFKLMNYSPPRIAAPKSFVLHKLKSTQQRDLANLHINPVNLEWLEFYICPKLLPSLHLYTAKLKKLVLPGSKVVDDVYLQQIAPLMPNLVHLDLRACEHITDAGLYAIGTHCPKIETLNCGRHTKGILVTDASISHIVANCNLKTLGVAGCGVSDAILWSLAYQKGHQLERLSLNSCWRLTDAGISSVLMMDRFPRLAVLEIRRLTRLQQLRPIVEFKKRQMRRKIAVLVEACEELEARLRAEERSLDLEISTRIFEDISEWLNGDDLQDQIEERNLQQFVQRRSVLV.

Positions 1–34 (MWDLAQQYPDTTPESSPLHETRARERRSSLVDHR) are disordered. Residues 17–34 (PLHETRARERRSSLVDHR) are compositionally biased toward basic and acidic residues.

The protein belongs to the AMN1 family.

It localises to the cytoplasm. The protein resides in the nucleus. In terms of biological role, negative regulator of the mitotic exit network (MEN), required for multiple cell cycle checkpoints. Required for daughter cell separation and chromosome stability. Involved in copper sensitivity. The protein is Antagonist of mitotic exit network protein 1 (AMN1) of Ogataea parapolymorpha (strain ATCC 26012 / BCRC 20466 / JCM 22074 / NRRL Y-7560 / DL-1) (Yeast).